The primary structure comprises 84 residues: MYB-like transcription factor TCL1 (84 aa).

A Myb-like domain is found at 36–73 (TEQEEDLIFRMYRLVGDRWDLIARRVVGREAKEIERYW).

Expressed in inflorescences and trichomes of rosette and cauline leaves.

It is found in the nucleus. Functionally, MYB-type transcription factor involved in trichome cell specification. Acts as a negative regulator of trichome patterning and formation by direct binding to the cis-acting regulatory elements of GL1, thus suppressing the expression of GL1. This chain is MYB-like transcription factor TCL1 (TCL1), found in Arabidopsis thaliana (Mouse-ear cress).